A 103-amino-acid chain; its full sequence is Large ribosomal subunit protein bL21 (103 aa).

Positions Tyr83–Pro92 are enriched in basic residues. Positions Tyr83–Ala103 are disordered.

Belongs to the bacterial ribosomal protein bL21 family. Part of the 50S ribosomal subunit. Contacts protein L20.

In terms of biological role, this protein binds to 23S rRNA in the presence of protein L20. The polypeptide is Large ribosomal subunit protein bL21 (Pelotomaculum thermopropionicum (strain DSM 13744 / JCM 10971 / SI)).